The chain runs to 431 residues: Protein farnesyltransferase subunit beta (431 aa).

PFTB repeat units lie at residues 130 to 171, 182 to 224, 231 to 273, 280 to 322, and 332 to 375; these read KRKI…SLCD, RKGI…TLLN, TEGV…AILR, VEKL…AILE, and KHAL…AVAE. (2E,6E)-farnesyl diphosphate is bound by residues 258 to 261 and 301 to 304; these read HGGY and RSNK. Zn(2+) is bound by residues D307 and C309. 310–313 contributes to the (2E,6E)-farnesyl diphosphate binding site; it reads YSFW. H363 serves as a coordination point for Zn(2+).

Belongs to the protein prenyltransferase subunit beta family. In terms of assembly, heterodimer of an alpha (RAM2) and a beta (RAM1) subunit. Zn(2+) serves as cofactor.

It localises to the cytoplasm. It catalyses the reaction L-cysteinyl-[protein] + (2E,6E)-farnesyl diphosphate = S-(2E,6E)-farnesyl-L-cysteinyl-[protein] + diphosphate. Its function is as follows. Catalyzes the transfer of a farnesyl moiety from farnesyl diphosphate to a cysteine at the fourth position from the C-terminus of several proteins having the C-terminal sequence Cys-aliphatic-aliphatic-X where X is Ser, Ala, Met, Cys, or Gln. Required for the membrane localization of proteins such as a-factor, Ras proteins and other membrane proteins containing the C-terminal CAAX motif. The beta subunit is responsible for isoprenoid and peptide-binding. The chain is Protein farnesyltransferase subunit beta from Saccharomyces cerevisiae (strain ATCC 204508 / S288c) (Baker's yeast).